The primary structure comprises 637 residues: Phospholipase B (637 aa).

The first 19 residues, Met-1–Ala-19, serve as a signal peptide directing secretion. A PLA2c domain is found at Asp-46–Asn-572. Residues Asn-50, Asn-56, Asn-122, Asn-231, Asn-246, Asn-272, Asn-314, Asn-343, Asn-387, Asn-433, Asn-481, Asn-501, Asn-528, Asn-553, Asn-572, Asn-594, and Asn-606 are each glycosylated (N-linked (GlcNAc...) asparagine).

The protein belongs to the lysophospholipase family. In terms of processing, N-glycosylated.

The protein resides in the secreted. Its subcellular location is the cell membrane. The enzyme catalyses a 1-acyl-sn-glycero-3-phosphocholine + H2O = sn-glycerol 3-phosphocholine + a fatty acid + H(+). With respect to regulation, inhibited by Fe(3+) ion. Functionally, exhibits phospholipase B (PLB), lysophospholipase (LPL) and lysophospholipase/transacylase (LPTA) activities. The sequence is that of Phospholipase B (PLB1) from Cryptococcus neoformans var. grubii serotype A (strain H99 / ATCC 208821 / CBS 10515 / FGSC 9487) (Filobasidiella neoformans var. grubii).